A 551-amino-acid chain; its full sequence is Seed biotin-containing protein SBP65 (551 aa).

Positions 1–20 are enriched in basic and acidic residues; sequence MASEQLSRRENITTERKIQN. The segment at 1-29 is disordered; the sequence is MASEQLSRRENITTERKIQNAEDSVPQRT. At K103 the chain carries N6-biotinyllysine; atypical. A coiled-coil region spans residues 141-211; sequence KGQVVEERER…RNTTQAAQEK (71 aa). Disordered stretches follow at residues 197–265 and 518–551; these read TNET…YEAT and DEVEKSMQKNIGSDSHSLDRAKHEGYRAPKNNVS. The span at 206–219 shows a compositional bias: low complexity; the sequence is QAAQEKGEAAQAKD. Composition is skewed to polar residues over residues 223-242 and 250-265; these read EKTQQGYEMTGDTVSNSART and AKNTTLGKTQQGYEAT. Residues 533–544 show a composition bias toward basic and acidic residues; it reads HSLDRAKHEGYR.

This sequence belongs to the seed biotin-containing protein SBP65 family. Expressed in dry mature seeds.

Functionally, may serve as a biotin source for several growth-limiting enzymes that are necessary during seed development and the subsequent germination stages, and thus may play some roles in determining seed germination capacity. The protein is Seed biotin-containing protein SBP65 (SBP65) of Pisum sativum (Garden pea).